A 149-amino-acid chain; its full sequence is MVYSTKLGEIEITDDQIFVFEEGIPGFEHLKKFALIFPEETFPIGWLLSLEDSHVGLPVVDPKLVRPDYDPVVPSEDLEKLGVSNQDELLFFCVLTIPPGKPEEATINLRAPIIIRQNTKKGMQVILENADYHLKHLLSEEMERAKSMV.

Belongs to the FliW family. In terms of assembly, interacts with translational regulator CsrA and flagellin(s).

Its subcellular location is the cytoplasm. Its function is as follows. Acts as an anti-CsrA protein, binds CsrA and prevents it from repressing translation of its target genes, one of which is flagellin. Binds to flagellin and participates in the assembly of the flagellum. This chain is Flagellar assembly factor FliW, found in Thermotoga neapolitana (strain ATCC 49049 / DSM 4359 / NBRC 107923 / NS-E).